Consider the following 324-residue polypeptide: MGYEKFTWVIKNFSSLQSKYINSDKFVIGGCKWFLKGYQNANYLSLFLMVATSKTLPCGWRRYTRFRLTVVNQLSDELSQQRETETWFDQNVVLSGNRHMISLTKLNAKKGGFLVNNEVKIVVEVDVLQVIGKLDVSEGSQEVTQPLKRIRLNDDGVSVKQSIDVNGFQVLPSQVESVKRIFERHPNMALEFRAKNQHVRTSCMNVLLSLIDTLCQSLQDISIDDLGQAEKALRYLKDSDFKVDWLERKLEEVKEKKMEEQIGKSRMQELEEELKIFKQKCSDIEAQLEKEKQKCSDIEALLEKEKAKSLAAARAPPLTLDDVV.

In terms of domain architecture, MATH spans 3–125 (YEKFTWVIKN…NNEVKIVVEV (123 aa)). Residues 241–309 (FKVDWLERKL…ALLEKEKAKS (69 aa)) are a coiled coil.

This is MATH domain and coiled-coil domain-containing protein At3g44790 from Arabidopsis thaliana (Mouse-ear cress).